We begin with the raw amino-acid sequence, 275 residues long: Transcriptional coregulator psa-3 (275 aa).

The 71-residue stretch at Thr-91 to Val-161 folds into the MEIS N-terminal domain. The segment at Gln-239–Asp-275 is disordered. Residues Ser-248–Gln-262 show a composition bias toward basic and acidic residues. Residues Lys-263–Asp-275 are compositionally biased toward low complexity.

Interacts with homeobox protein ceh-20; the interaction is direct, facilitates nuclear localization of ceh-20 and may stabilize interaction of a ceh-20-nob-1 complex with DNA.

Its subcellular location is the nucleus. Functionally, probable transcription coregulator. Required for asymmetric cell divisions of the T hypodermal cells, and cell fate determination, in concert with homeobox proteins nob-1 and ceh-20. Acts downstream of the Wnt signaling pathway, and of ceh-20 and nob-1. This chain is Transcriptional coregulator psa-3, found in Caenorhabditis elegans.